A 155-amino-acid polypeptide reads, in one-letter code: Endoribonuclease YbeY (155 aa).

Zn(2+) is bound by residues H120, H124, and H130.

This sequence belongs to the endoribonuclease YbeY family. The cofactor is Zn(2+).

It localises to the cytoplasm. In terms of biological role, single strand-specific metallo-endoribonuclease involved in late-stage 70S ribosome quality control and in maturation of the 3' terminus of the 16S rRNA. In Staphylococcus aureus (strain Mu3 / ATCC 700698), this protein is Endoribonuclease YbeY.